The sequence spans 85 residues: Conotoxin Lt28.3 (85 aa).

The N-terminal stretch at 1-21 (MPKLEMMLLVLLILPLCYIDA) is a signal peptide. A propeptide spanning residues 22–40 (VGPLPPWNMEDEIIEHWQK) is cleaved from the precursor.

This sequence belongs to the conotoxin D superfamily. In terms of processing, contains 5 disulfide bonds. In terms of tissue distribution, expressed by the venom duct.

The protein resides in the secreted. Functionally, probable neurotoxin. This is Conotoxin Lt28.3 from Conus litteratus (Lettered cone).